Reading from the N-terminus, the 305-residue chain is Taste receptor type 2 member 136 (305 aa).

Residues 1 to 9 (MMSFLVSIA) are Extracellular-facing. The helical transmembrane segment at 10-30 (SIAMLVKIVLGTFANVFIVLV) threads the bilayer. Topologically, residues 31-46 (NFTDCIKKRKFLLADR) are cytoplasmic. The helical transmembrane segment at 47–67 (ILTVLAIFRFDLLWIILMNWS) threads the bilayer. Residues 68 to 69 (SS) are Extracellular-facing. A helical transmembrane segment spans residues 70 to 90 (VFHVGLYFQVRFCICVVWIVT). Residues 91 to 99 (NHFNTWLAN) are Cytoplasmic-facing. A helical transmembrane segment spans residues 100–120 (ILSILYLLKIDNFSNLIFLGL). Residues 121–127 (KGKIKCP) are Extracellular-facing. A helical transmembrane segment spans residues 128–148 (YIVLLPCFVLLFPNLIMVTIC). Topologically, residues 149–176 (ETTQANGHQGNLTGKTKLTYFTNLIAMT) are cytoplasmic. Residues 177–197 (FTLGSLVPFTTFMICFLLLIC) traverse the membrane as a helical segment. Residues 198 to 223 (SLCKHLRTMRLYGKGSQGPSASTHIK) lie on the Extracellular side of the membrane. The helical transmembrane segment at 224–244 (VLQVLISFLLLFSMFILLLII) threads the bilayer. Over 245-305 (SDYNYTKSLE…ARFWLKEKKP (61 aa)) the chain is Cytoplasmic.

It belongs to the G-protein coupled receptor T2R family.

It localises to the membrane. Its function is as follows. Putative taste receptor which may play a role in the perception of bitterness. This Mus musculus (Mouse) protein is Taste receptor type 2 member 136 (Tas2r136).